We begin with the raw amino-acid sequence, 445 residues long: MFRVAIVGIPNVGKSSLFNRIIGQRKAIVEDIPGVTRDRIVSTAEWRGVKFEVVDTGGYITGDEDKFAPYIRKQVEKELELSDLFIFVVDGKQGLTPLDKEIANILHRTEKPVIVAVNKIDDPEKEKLAYEFYELGFENIIPISAIQKLGLAELLDKVVEYIPEYEKEIQEEEEKEEKRDYIKVAIVGKPNAGKSSLINALLNEERVLVSEIPGTTRDTVDILYEKDGQKFLFLDTAGMRKKSKVDFGLEFFSVGRTIEAIEKADVVVLVIDANQGATEQDTKIAGLIQRRYKPAVIVINKIDTVDKKTLEKVEKQVRERLYFISYAPIVFTSAKTKEGLDELLEKIVYVYNQAWKRVGTGQLNRAIKQIQNLRQPPTYQGKPLKIYYATQLEGKPPAFLLFVNKAEGFKENYVKFLENNLRKLLGLENAPIKLIFRGKEEEKDK.

2 consecutive EngA-type G domains span residues 2-166 (FRVA…PEYE) and 182-355 (IKVA…NQAW). GTP-binding positions include 8–15 (GIPNVGKS), 55–59 (DTGGY), 118–121 (NKID), 188–195 (GKPNAGKS), 235–239 (DTAGM), and 300–303 (NKID). Residues 356–440 (KRVGTGQLNR…PIKLIFRGKE (85 aa)) form the KH-like domain.

Belongs to the TRAFAC class TrmE-Era-EngA-EngB-Septin-like GTPase superfamily. EngA (Der) GTPase family. As to quaternary structure, associates with the 50S ribosomal subunit.

GTPase that plays an essential role in the late steps of ribosome biogenesis. This is GTPase Der from Sulfurihydrogenibium sp. (strain YO3AOP1).